Consider the following 341-residue polypeptide: MATIKDVAKHAGVSTTTVSHVINKTRFVAENTKAAVWAAIKELHYSPSAVARSLKVNHTKSIGLLATSSEAPYFAEVIEAVENSCYSKGYTLILCNSHNNLDKQKAYLAMLAQKRVDGLLVMCSEYPDQLLGMLEDYRNIPMVVMDWGTARGDFTDSIIDNAFEGGYLAGRYLIERGHRDIGAIPGQLARNTGGGRHQGFLKALEEANIPVREEWIVQGDFEPESGYKAMHQILTQKHRPTAVFCGGDIMAMGAICAADELGLRVPQDISVIGYDNVRNARYFSPALTTIHQPKERLGETAFAMLLDRIVSKREDPQTIEVHPKLVERRSVADGPFRDYRR.

Positions 2-56 (ATIKDVAKHAGVSTTTVSHVINKTRFVAENTKAAVWAAIKELHYSPSAVARSLKV) constitute an HTH lacI-type domain. Residues 4-23 (IKDVAKHAGVSTTTVSHVIN) constitute a DNA-binding region (H-T-H motif). Residues 48 to 56 (SAVARSLKV) mediate DNA binding. Hypoxanthine contacts are provided by Tyr-73, Arg-190, Thr-192, Phe-221, and Asp-275.

Homodimer.

Its pathway is purine metabolism; purine nucleotide biosynthesis [regulation]. Functionally, is the main repressor of the genes involved in the de novo synthesis of purine nucleotides, regulating purB, purC, purEK, purF, purHD, purL, purMN and guaBA expression. PurR is allosterically activated to bind its cognate DNA by binding the purine corepressors, hypoxanthine or guanine, thereby effecting transcription repression. This chain is HTH-type transcriptional repressor PurR, found in Yersinia pseudotuberculosis serotype O:1b (strain IP 31758).